The sequence spans 201 residues: Small ribosomal subunit protein uS4c (201 aa).

The 62-residue stretch at 89-150 (MRLDNIVFRL…RQKSQAIITK (62 aa)) folds into the S4 RNA-binding domain.

This sequence belongs to the universal ribosomal protein uS4 family. Part of the 30S ribosomal subunit. Contacts protein S5. The interaction surface between S4 and S5 is involved in control of translational fidelity.

It is found in the plastid. The protein localises to the chloroplast. One of the primary rRNA binding proteins, it binds directly to 16S rRNA where it nucleates assembly of the body of the 30S subunit. Functionally, with S5 and S12 plays an important role in translational accuracy. The polypeptide is Small ribosomal subunit protein uS4c (rps4) (Physcomitrium patens (Spreading-leaved earth moss)).